The sequence spans 161 residues: SsrA-binding protein (161 aa).

The disordered stretch occupies residues 140–161; it reads KRESIKERDWKRDKQRLLKDRG.

Belongs to the SmpB family.

The protein localises to the cytoplasm. Functionally, required for rescue of stalled ribosomes mediated by trans-translation. Binds to transfer-messenger RNA (tmRNA), required for stable association of tmRNA with ribosomes. tmRNA and SmpB together mimic tRNA shape, replacing the anticodon stem-loop with SmpB. tmRNA is encoded by the ssrA gene; the 2 termini fold to resemble tRNA(Ala) and it encodes a 'tag peptide', a short internal open reading frame. During trans-translation Ala-aminoacylated tmRNA acts like a tRNA, entering the A-site of stalled ribosomes, displacing the stalled mRNA. The ribosome then switches to translate the ORF on the tmRNA; the nascent peptide is terminated with the 'tag peptide' encoded by the tmRNA and targeted for degradation. The ribosome is freed to recommence translation, which seems to be the essential function of trans-translation. The chain is SsrA-binding protein from Sphingopyxis alaskensis (strain DSM 13593 / LMG 18877 / RB2256) (Sphingomonas alaskensis).